The chain runs to 510 residues: 11S globulin (510 aa).

The signal sequence occupies residues 1-23 (MAKPILLSISLCLVALVNGCLAQ). 2 cysteine pairs are disulfide-bonded: Cys-35-Cys-68 and Cys-111-Cys-325. The 220-residue stretch at 38-257 (KRLVALEPSN…AFNVDTETAR (220 aa)) folds into the Cupin type-1 1 domain. 2 disordered regions span residues 194–239 (AGNP…VFSG) and 284–319 (WSRE…DDNG). The span at 284-318 (WSREEQEREERKERERERESESERRQSRRGGRDDN) shows a compositional bias: basic and acidic residues. The NGXEET; peptidase recognition motif motif lies at 318–323 (NGLEET). In terms of domain architecture, Cupin type-1 2 spans 331 to 480 (ENIGDPSRAD…ALQIPREDAR (150 aa)). The segment at 487–510 (QESTLVRSRPSSSRSSRSERRAEV) is disordered.

This sequence belongs to the 11S seed storage protein (globulins) family. Homohexamer. Can assemble in other multimeric configurations. In terms of processing, proteolytically processed from a single precursor to produce an acidic and a basic chain that are linked by a disulfide bond. In terms of tissue distribution, expressed in endosperm of the seed.

Seed storage protein. The chain is 11S globulin from Juglans nigra (Black walnut).